Reading from the N-terminus, the 274-residue chain is Octanoyl-[GcvH]:protein N-octanoyltransferase (274 aa).

A BPL/LPL catalytic domain is found at Gln37–Ser242. Cys141 (acyl-thioester intermediate) is an active-site residue.

Belongs to the octanoyltransferase LipL family.

The catalysed reaction is N(6)-octanoyl-L-lysyl-[glycine-cleavage complex H protein] + L-lysyl-[lipoyl-carrier protein] = N(6)-octanoyl-L-lysyl-[lipoyl-carrier protein] + L-lysyl-[glycine-cleavage complex H protein]. It participates in protein modification; protein lipoylation via endogenous pathway; protein N(6)-(lipoyl)lysine from octanoyl-[acyl-carrier-protein]. Its function is as follows. Catalyzes the amidotransfer (transamidation) of the octanoyl moiety from octanoyl-GcvH to the lipoyl domain of the E2 subunit of lipoate-dependent enzymes. This Macrococcus caseolyticus (strain JCSC5402) (Macrococcoides caseolyticum) protein is Octanoyl-[GcvH]:protein N-octanoyltransferase.